The sequence spans 176 residues: Centromere protein R (176 aa).

Residue lysine 8 forms a Glycyl lysine isopeptide (Lys-Gly) (interchain with G-Cter in SUMO2) linkage. A Phosphoserine modification is found at serine 17. Residues 20 to 50 (PSKIMRKKSITAFSPTTGTYQLSPFSSPRTP) form a DD1 region. Residue lysine 22 forms a Glycyl lysine isopeptide (Lys-Gly) (interchain with G-Cter in SUMO2) linkage. Residue serine 28 is modified to Phosphoserine. The segment covering 34–48 (PTTGTYQLSPFSSPR) has biased composition (polar residues). The tract at residues 34-80 (PTTGTYQLSPFSSPRTPKEQEHRDGPSNGTRKWSVLSSPARQDSTVK) is disordered. Positions 49–58 (TPKEQEHRDG) are enriched in basic and acidic residues. Residues 60–80 (SNGTRKWSVLSSPARQDSTVK) show a composition bias toward polar residues. The Nuclear localization signal signature appears at 63-66 (TRKW). Position 71 is a phosphoserine (serine 71). The stretch at 82 to 112 (SDGFMMLLSKIERSSEKTMEIMKNLSSLQAL) forms a coiled coil. Positions 118–122 (LEDLL) match the LXXLL motif motif. The LXXIL motif motif lies at 171-175 (LKAIL).

In terms of assembly, homodimer; mediated by the coiled coil domain. Interacts with CCNA2 and MTA1. Interacts with NFKB1 NF-kappa-B subunit. Component of the CENPA-CAD complex, composed of CENPI, CENPK, CENPL, CENPO, CENPP, CENPQ, CENPR and CENPS. The CENPA-CAD complex interacts with the CENPA-NAC complex, at least composed of CENPA, CENPC, CENPH, CENPM, CENPN, CENPT and CENPU. Interacts with TASOR.

Its subcellular location is the nucleus. It localises to the chromosome. It is found in the centromere. The protein localises to the kinetochore. Functionally, transcription coregulator that can have both coactivator and corepressor functions. Involved in the coactivation of nuclear receptors for retinoid X (RXRs) and thyroid hormone (TRs) in a ligand-dependent fashion. In contrast, it does not coactivate nuclear receptors for retinoic acid, vitamin D, progesterone receptor, nor glucocorticoid. Acts as a coactivator for estrogen receptor alpha. Acts as a transcriptional corepressor via its interaction with the NFKB1 NF-kappa-B subunit, possibly by interfering with the transactivation domain of NFKB1. Induces apoptosis in breast cancer cells, but not in other cancer cells, via a caspase-2 mediated pathway that involves mitochondrial membrane permeabilization but does not require other caspases. May also act as an inhibitor of cyclin A-associated kinase. Also acts a component of the CENPA-CAD (nucleosome distal) complex, a complex recruited to centromeres which is involved in assembly of kinetochore proteins, mitotic progression and chromosome segregation. May be involved in incorporation of newly synthesized CENPA into centromeres via its interaction with the CENPA-NAC complex. The polypeptide is Centromere protein R (Itgb3bp) (Rattus norvegicus (Rat)).